The primary structure comprises 444 residues: Deoxyguanosinetriphosphate triphosphohydrolase-like protein (444 aa).

Residues 1–28 form a disordered region; sequence MTDAVWNERRLGEDKQRRNDHRSPYQRD. Positions 59-250 constitute an HD domain; sequence RLTHSLEVSQ…MELADDIAYA (192 aa).

The protein belongs to the dGTPase family. Type 2 subfamily.

The sequence is that of Deoxyguanosinetriphosphate triphosphohydrolase-like protein from Shewanella pealeana (strain ATCC 700345 / ANG-SQ1).